The sequence spans 160 residues: ATP synthase subunit b 3 (160 aa).

A helical transmembrane segment spans residues 5–25; the sequence is PTFWVLVAFVLFVAAVWRIAA.

The protein belongs to the ATPase B chain family. As to quaternary structure, F-type ATPases have 2 components, F(1) - the catalytic core - and F(0) - the membrane proton channel. F(1) has five subunits: alpha(3), beta(3), gamma(1), delta(1), epsilon(1). F(0) has three main subunits: a(1), b(2) and c(10-14). The alpha and beta chains form an alternating ring which encloses part of the gamma chain. F(1) is attached to F(0) by a central stalk formed by the gamma and epsilon chains, while a peripheral stalk is formed by the delta and b chains.

It is found in the cell inner membrane. F(1)F(0) ATP synthase produces ATP from ADP in the presence of a proton or sodium gradient. F-type ATPases consist of two structural domains, F(1) containing the extramembraneous catalytic core and F(0) containing the membrane proton channel, linked together by a central stalk and a peripheral stalk. During catalysis, ATP synthesis in the catalytic domain of F(1) is coupled via a rotary mechanism of the central stalk subunits to proton translocation. Functionally, component of the F(0) channel, it forms part of the peripheral stalk, linking F(1) to F(0). In Rhodospirillum centenum (strain ATCC 51521 / SW), this protein is ATP synthase subunit b 3.